Consider the following 318-residue polypeptide: GTP cyclohydrolase MptA (318 aa).

It belongs to the GTP cyclohydrolase IV family. As to quaternary structure, homodimer. Fe(2+) serves as cofactor.

The enzyme catalyses GTP + H2O = 7,8-dihydroneopterin 2',3'-cyclic phosphate + formate + diphosphate + H(+). The protein operates within cofactor biosynthesis; 5,6,7,8-tetrahydromethanopterin biosynthesis. Functionally, converts GTP to 7,8-dihydro-D-neopterin 2',3'-cyclic phosphate, the first intermediate in the biosynthesis of coenzyme methanopterin. This chain is GTP cyclohydrolase MptA, found in Methanosarcina acetivorans (strain ATCC 35395 / DSM 2834 / JCM 12185 / C2A).